Consider the following 151-residue polypeptide: RNA polymerase-binding transcription factor DksA (151 aa).

Positions 34–54 form a coiled coil; that stretch reads EAQLSHFKRILEAWRNQLRDE. Residues cysteine 114, cysteine 117, cysteine 135, and cysteine 138 each contribute to the Zn(2+) site. A dksA C4-type zinc finger spans residues 114-138; it reads CESCGVEIGIRRLEARPTADLCIDC.

It belongs to the DksA family. As to quaternary structure, interacts directly with the RNA polymerase.

It is found in the cytoplasm. Transcription factor that acts by binding directly to the RNA polymerase (RNAP). Required for negative regulation of rRNA expression and positive regulation of several amino acid biosynthesis promoters. Also required for regulation of fis expression. This chain is RNA polymerase-binding transcription factor DksA, found in Salmonella typhi.